The following is a 271-amino-acid chain: Co-chaperone protein DjlA (271 aa).

Residues 1-6 (MQYWGK) lie on the Periplasmic side of the membrane. Residues 7 to 31 (IIGVAVALIMGGGFWGVVLGLLIGH) traverse the membrane as a helical segment. Over 32–271 (MFDKARSRKM…ELIKQQKGFK (240 aa)) the chain is Cytoplasmic. Positions 205 to 271 (DACNVLGVKP…ELIKQQKGFK (67 aa)) constitute a J domain.

Homodimer.

Its subcellular location is the cell inner membrane. Regulatory DnaK co-chaperone. Direct interaction between DnaK and DjlA is needed for the induction of the wcaABCDE operon, involved in the synthesis of a colanic acid polysaccharide capsule, possibly through activation of the RcsB/RcsC phosphotransfer signaling pathway. The colanic acid capsule may help the bacterium survive conditions outside the host. The polypeptide is Co-chaperone protein DjlA (Escherichia coli O6:H1 (strain CFT073 / ATCC 700928 / UPEC)).